The following is a 493-amino-acid chain: FAD-linked oxidoreductase tazL (493 aa).

Residues 1-17 form the signal peptide; it reads MRSNTVILAALPLVASA. Residues Asn29, Asn41, Asn53, Asn91, Asn253, Asn318, and Asn387 are each glycosylated (N-linked (GlcNAc...) asparagine). In terms of domain architecture, FAD-binding PCMH-type spans 63–235; it reads WAEPTFAVTI…TSATYEIFDA (173 aa).

Belongs to the oxygen-dependent FAD-linked oxidoreductase family.

The protein operates within secondary metabolite biosynthesis. Functionally, FAD-linked oxidoreductase; part of the gene cluster that mediates the biosynthesis of azaterrilone A and other azaphilones, a class of fungal metabolites characterized by a highly oxygenated pyrano-quinone bicyclic core and exhibiting a broad range of bioactivities. The first step of the pathway begins with the non-reducing polyketide synthase tazA that assembles one acetyl-CoA starter unit, five malonyl-CoA units, and catalyzes a series of Claisen condensations, methylation, PT-mediated cyclization, and finally releases the first hexaketide precursor through the R-domain. The tazA product then undergoes reduction on its terminal ketone and the following pyran-ring formation by yet undetermined enzyme(s). Dehydration and enoyl reduction, possibly involving the trans-enoyl reductase tazE leads to the next intermediate. TazD is predicted as an acetyltransferase and might catalyze the acetylation steps leading to the synthesis of azaterrilone A. Azaterrilone A is not the final product of the taz pathway and both the highly reducing polyketide synthase tazB and the dual enzyme tazHJ catalyze late steps of the pathway, leading to the production of the 2 final stereoisomers that contain additional polyketide modification whose structures have still to be determined. The polypeptide is FAD-linked oxidoreductase tazL (Aspergillus terreus (strain NIH 2624 / FGSC A1156)).